The chain runs to 103 residues: Co-chaperonin GroES (103 aa).

It belongs to the GroES chaperonin family. As to quaternary structure, heptamer of 7 subunits arranged in a ring. Interacts with the chaperonin GroEL.

It localises to the cytoplasm. In terms of biological role, together with the chaperonin GroEL, plays an essential role in assisting protein folding. The GroEL-GroES system forms a nano-cage that allows encapsulation of the non-native substrate proteins and provides a physical environment optimized to promote and accelerate protein folding. GroES binds to the apical surface of the GroEL ring, thereby capping the opening of the GroEL channel. The protein is Co-chaperonin GroES of Prochlorococcus marinus (strain MIT 9313).